We begin with the raw amino-acid sequence, 140 residues long: MIDLNALCSECGVKFYADELISENSRQIYRVYITKKNGVNLDDCEALSRLLSPILDVEPPTSGAFTLEVSSPGLERKLTTPSNFENSLGELVKITLKNGEKISGEILSFKDEILKLKTAENNEISVNFNEIKKAKTYIEW.

The protein belongs to the RimP family.

It is found in the cytoplasm. Functionally, required for maturation of 30S ribosomal subunits. This chain is Ribosome maturation factor RimP, found in Campylobacter hominis (strain ATCC BAA-381 / DSM 21671 / CCUG 45161 / LMG 19568 / NCTC 13146 / CH001A).